Reading from the N-terminus, the 409-residue chain is Elongation factor Tu (409 aa).

In terms of domain architecture, tr-type G spans 10 to 214; it reads KPHANIGTIG…EVDAYIPTPE (205 aa). The G1 stretch occupies residues 19 to 26; it reads GHVDHGKT. GTP is bound at residue 19 to 26; sequence GHVDHGKT. Thr-26 is a binding site for Mg(2+). A G2 region spans residues 60–64; that stretch reads GITIN. A G3 region spans residues 81–84; the sequence is DCPG. GTP contacts are provided by residues 81–85 and 136–139; these read DCPGH and NKED. A G4 region spans residues 136–139; it reads NKED. Residues 174-176 are G5; the sequence is SAL.

The protein belongs to the TRAFAC class translation factor GTPase superfamily. Classic translation factor GTPase family. EF-Tu/EF-1A subfamily. As to quaternary structure, monomer.

It localises to the cytoplasm. It catalyses the reaction GTP + H2O = GDP + phosphate + H(+). GTP hydrolase that promotes the GTP-dependent binding of aminoacyl-tRNA to the A-site of ribosomes during protein biosynthesis. This Synechococcus elongatus (strain ATCC 33912 / PCC 7942 / FACHB-805) (Anacystis nidulans R2) protein is Elongation factor Tu.